Consider the following 629-residue polypeptide: tRNA uridine 5-carboxymethylaminomethyl modification enzyme MnmG (629 aa).

Position 4–9 (4–9 (GGGHAG)) interacts with FAD. An NAD(+)-binding site is contributed by 268-282 (GPRYCPSIEDKVNRF).

It belongs to the MnmG family. As to quaternary structure, homodimer. Heterotetramer of two MnmE and two MnmG subunits. Requires FAD as cofactor.

Its subcellular location is the cytoplasm. Its function is as follows. NAD-binding protein involved in the addition of a carboxymethylaminomethyl (cmnm) group at the wobble position (U34) of certain tRNAs, forming tRNA-cmnm(5)s(2)U34. In Helicobacter hepaticus (strain ATCC 51449 / 3B1), this protein is tRNA uridine 5-carboxymethylaminomethyl modification enzyme MnmG.